We begin with the raw amino-acid sequence, 397 residues long: Serpin B10 (397 aa).

Positions 74 to 77 match the Nuclear localization signal motif; sequence KKRK.

It belongs to the serpin family. Ov-serpin subfamily.

It is found in the nucleus. The protein resides in the cytoplasm. Its function is as follows. Protease inhibitor that may play a role in the regulation of protease activities during hematopoiesis and apoptosis induced by TNF. May regulate protease activities in the cytoplasm and in the nucleus. This chain is Serpin B10 (SERPINB10), found in Plecturocebus moloch (Dusky titi monkey).